Consider the following 547-residue polypeptide: Agglutinin-1 (547 aa).

A signal peptide spans 1–20 (MKFETTKNKLHGNAYYQAQF). Q21 is modified (pyrrolidone carboxylic acid). The active site involves E183. Intrachain disulfides connect C266–C288, C305–C324, and C348–C365. Residues 279 to 280 (RS) constitute a propeptide, linker peptide. The Ricin B-type lectin 1 domain occupies 292 to 419 (YEPTVRIGGR…YRMRQGWRTG (128 aa)). The stretch at 302 to 344 (DGLCVDVSDNAYNNGNPIILWKCKDQLEVNQLWTLKSDKTIRS) is one 1-alpha repeat. One copy of the 1-beta repeat lies at 345–385 (KGKCLTTYGYAPGNYVMIYDCSSAVAEATYWDIWDNGTIIN). N-linked (GlcNAc...) asparagine glycans are attached at residues N380 and N420. A 1-gamma repeat occupies 388 to 420 (SGLVLSAESSSMGGTLTVQKNDYRMRQGWRTGN). One can recognise a Ricin B-type lectin 2 domain in the interval 422–546 (TSPFVTSIAG…GNANQMWATL (125 aa)). The 2-alpha repeat unit spans residues 433-468 (FKLCMEAHGNSMWLDVCDITKEEQQWAVYPDGSIRP). Intrachain disulfides connect C436-C449 and C475-C492. The 2-beta repeat unit spans residues 472-511 (TNNCLTCEEHKQGATIVMMGCSNAWASQRWVFKSDGTIYN). One copy of the 2-gamma repeat lies at 514–547 (DDMVMDVKSSDPSLKQIILWPYTGNANQMWATLF).

This sequence in the N-terminal section; belongs to the ribosome-inactivating protein family. Type 2 RIP subfamily. In terms of assembly, heterotetramer of two A and two B chains.

The catalysed reaction is Endohydrolysis of the N-glycosidic bond at one specific adenosine on the 28S rRNA.. Functionally, the A chain is responsible for inhibiting protein synthesis through the catalytic inactivation of 60S ribosomal subunits by removing adenine from position 4,324 of 28S rRNA. Less toxic than abrin-a. In terms of biological role, the B chain is a galactose-specific lectin that facilitates the binding to the cell membrane that precedes endocytosis. The chain is Agglutinin-1 from Abrus precatorius (Indian licorice).